The chain runs to 215 residues: Protein GrpE (215 aa).

The segment covering 1-28 has biased composition (polar residues); it reads MKHTSDTPSNSDMPSDSQATQPNASATG. Residues 1–52 are disordered; it reads MKHTSDTPSNSDMPSDSQATQPNASATGQAAHAYSSQAQRASADAQAVAGDE. Low complexity predominate over residues 29–52; the sequence is QAAHAYSSQAQRASADAQAVAGDE.

Belongs to the GrpE family. As to quaternary structure, homodimer.

It localises to the cytoplasm. Participates actively in the response to hyperosmotic and heat shock by preventing the aggregation of stress-denatured proteins, in association with DnaK and GrpE. It is the nucleotide exchange factor for DnaK and may function as a thermosensor. Unfolded proteins bind initially to DnaJ; upon interaction with the DnaJ-bound protein, DnaK hydrolyzes its bound ATP, resulting in the formation of a stable complex. GrpE releases ADP from DnaK; ATP binding to DnaK triggers the release of the substrate protein, thus completing the reaction cycle. Several rounds of ATP-dependent interactions between DnaJ, DnaK and GrpE are required for fully efficient folding. This is Protein GrpE from Ralstonia pickettii (strain 12J).